Here is a 238-residue protein sequence, read N- to C-terminus: Pyridoxine 5'-phosphate synthase (238 aa).

2 residues coordinate 3-amino-2-oxopropyl phosphate: N7 and R18. H43 functions as the Proton acceptor in the catalytic mechanism. Positions 45 and 50 each coordinate 1-deoxy-D-xylulose 5-phosphate. E70 acts as the Proton acceptor in catalysis. T100 is a binding site for 1-deoxy-D-xylulose 5-phosphate. H190 acts as the Proton donor in catalysis. Residues D191 and 213 to 214 (GH) each bind 3-amino-2-oxopropyl phosphate.

Belongs to the PNP synthase family. As to quaternary structure, homooctamer; tetramer of dimers.

The protein resides in the cytoplasm. The enzyme catalyses 3-amino-2-oxopropyl phosphate + 1-deoxy-D-xylulose 5-phosphate = pyridoxine 5'-phosphate + phosphate + 2 H2O + H(+). It participates in cofactor biosynthesis; pyridoxine 5'-phosphate biosynthesis; pyridoxine 5'-phosphate from D-erythrose 4-phosphate: step 5/5. In terms of biological role, catalyzes the complicated ring closure reaction between the two acyclic compounds 1-deoxy-D-xylulose-5-phosphate (DXP) and 3-amino-2-oxopropyl phosphate (1-amino-acetone-3-phosphate or AAP) to form pyridoxine 5'-phosphate (PNP) and inorganic phosphate. In Porphyromonas gingivalis (strain ATCC 33277 / DSM 20709 / CIP 103683 / JCM 12257 / NCTC 11834 / 2561), this protein is Pyridoxine 5'-phosphate synthase.